The chain runs to 151 residues: Large ribosomal subunit protein uL13 (151 aa).

The interval 126-151 (YPGPNHPHQAQKPEELTLNTIPNGDK) is disordered. A compositionally biased stretch (polar residues) spans 142 to 151 (TLNTIPNGDK).

The protein belongs to the universal ribosomal protein uL13 family. Part of the 50S ribosomal subunit.

In terms of biological role, this protein is one of the early assembly proteins of the 50S ribosomal subunit, although it is not seen to bind rRNA by itself. It is important during the early stages of 50S assembly. This is Large ribosomal subunit protein uL13 from Crocosphaera subtropica (strain ATCC 51142 / BH68) (Cyanothece sp. (strain ATCC 51142)).